The primary structure comprises 175 residues: NADH-quinone oxidoreductase subunit B (175 aa).

[4Fe-4S] cluster is bound by residues C49, C50, C115, and C145.

This sequence belongs to the complex I 20 kDa subunit family. In terms of assembly, NDH-1 is composed of 14 different subunits. Subunits NuoB, C, D, E, F, and G constitute the peripheral sector of the complex. [4Fe-4S] cluster is required as a cofactor.

It localises to the cell membrane. It carries out the reaction a quinone + NADH + 5 H(+)(in) = a quinol + NAD(+) + 4 H(+)(out). NDH-1 shuttles electrons from NADH, via FMN and iron-sulfur (Fe-S) centers, to quinones in the respiratory chain. The immediate electron acceptor for the enzyme in this species is believed to be a menaquinone. Couples the redox reaction to proton translocation (for every two electrons transferred, four hydrogen ions are translocated across the cytoplasmic membrane), and thus conserves the redox energy in a proton gradient. In Heliobacterium modesticaldum (strain ATCC 51547 / Ice1), this protein is NADH-quinone oxidoreductase subunit B.